Reading from the N-terminus, the 297-residue chain is Ezy-1 protein (297 aa).

Disordered regions lie at residues 1-34 (MAAVVGTGSDGGGDESGDRRTADAADADGDGDGG), 115-151 (FTGKAEPGAEGDDGEDEEEGEAQGVGKDAVDSSSSSS), and 255-297 (QPAG…SPNM). Acidic residues predominate over residues 123 to 135 (AEGDDGEDEEEGE). A compositionally biased stretch (low complexity) spans 136-150 (AQGVGKDAVDSSSSS). Basic and acidic residues predominate over residues 259 to 269 (DGHEPEPKRPE).

The polypeptide is Ezy-1 protein (Ezy-1) (Chlamydomonas reinhardtii (Chlamydomonas smithii)).